The chain runs to 97 residues: Putative pterin-4-alpha-carbinolamine dehydratase (97 aa).

The protein belongs to the pterin-4-alpha-carbinolamine dehydratase family.

It catalyses the reaction (4aS,6R)-4a-hydroxy-L-erythro-5,6,7,8-tetrahydrobiopterin = (6R)-L-erythro-6,7-dihydrobiopterin + H2O. The polypeptide is Putative pterin-4-alpha-carbinolamine dehydratase (Saccharolobus solfataricus (strain ATCC 35092 / DSM 1617 / JCM 11322 / P2) (Sulfolobus solfataricus)).